The sequence spans 220 residues: Polyadenylate-binding protein 2 (220 aa).

A disordered region spans residues Met-1 to Glu-24. A coiled-coil region spans residues Ala-34–Gln-74. The segment at Ser-78–Tyr-219 is necessary for homooligomerization. In terms of domain architecture, RRM spans Arg-92–Thr-168. A Nuclear localization signal motif is present at residues Gln-165–Gly-172.

In terms of assembly, monomer and homooligomer. Binds RNA as a monomer and oligomerizes when bound to poly(A). Forms a complex with cleavage and polyadenylation specificity factor (CPSF) subunits PAPS2, FIPS5, PABN3 and PABN1. Interacts with CSP3.

The protein localises to the nucleus speckle. The protein resides in the cytoplasm. Involved in the 3'-end formation of mRNA precursors (pre-mRNA) by the addition of a poly(A) tail of 200-250 nt to the upstream cleavage product. Stimulates poly(A) polymerase (PAPOLA) conferring processivity on the poly(A) tail elongation reaction and also controls the poly(A) tail length. Increases the affinity of poly(A) polymerase for RNA. Binds to poly(A) and to poly(G) with high affinity. May protect the poly(A) tail from degradation. The polypeptide is Polyadenylate-binding protein 2 (Arabidopsis thaliana (Mouse-ear cress)).